A 1023-amino-acid chain; its full sequence is MCARMAGRTTAAPRGPYGPWLCLLVALALDVVRVDCGQAPLDPVYLPAALELLDAPEHFRVQQVGHYPPANSSLSSRSETFLLLQPWPRAQPLLRASYPPFATQQVVPPRVTEPHQRPVPWDVRAVSVEAAVTPAEPYARVLFHLKGQDWPPGSGSLPCARLHATHPAGTAHQACRFQPSLGACVVELELPSHWFSQASTTRAELAYTLEPAAEGPGGCGSGEENDPGEQALPVGGVELRPADPPQYQEVPLDEAVTLRVPDMPVRPGQLFSATLLLRHNFTASLLTLRIKVKKGLHVTAARPAQPTLWTAKLDRFKGSRHHTTLITCHRAGLTEPDSSPLELSEFLWVDFVVENSTGGGVAVTRPVTWQLEYPGQAPEAEKDKMVWEILVSERDIRALIPLAKAEELVNTAPLTGVPQHVPVRLVTVDGGGALVEVTEHVGCESANTQVLQVSEACDAVFVAGKESRGARGVRVDFWWRRLRASLRLTVWAPLLPLRIELTDTTLEQVRGWRVPGPAEGPAEPAAEASDEAERRARGCHLQYQRAGVRFLAPFAAHPLDGGRRLTHLLGPDWLLDVSHLVAPHARVLDSRVASLEGGRVVVGREPGVTSIEVRSPLSDSILGEQALAVTDDKVSVLELRVQPVMGISLTLSRGTAHPGEVTATCWAQSALPAPKQEVALSLWLSFSDHTVAPAELYDRRDLGLSVSAEEPGAILPAEEQGAQLGVVVSGAGAEGLPLHVALHPPEPCRRGRHRVPLASGTAWLGLPPASTPAPALPSSPAWSPPATEATMGGKRQVAGSVGGNTGVRGKFERAEEEARKEETEAREEEEEEEEEMVPAPQHVTELELGMYALLGVFCVAIFIFLVNGVVFVLRYQRKEPPDSATDPTSPQPHNWVWLGTDQEELSRQLDRQSPGPPKGEGSCPCESGGGGEAPTLAPGPPGGTTSSSSTLARKEAGGRRKRVEFVTFAPAPPAQSPEEPVGAPAVQSILVAGEEDIRWVCEDMGLKDPEELRNYMERIRGSS.

Positions 1–35 are cleaved as a signal peptide; the sequence is MCARMAGRTTAAPRGPYGPWLCLLVALALDVVRVD. Residues 36-852 are Extracellular-facing; sequence CGQAPLDPVY…VTELELGMYA (817 aa). Residues 212–246 are disordered; it reads AAEGPGGCGSGEENDPGEQALPVGGVELRPADPPQ. An N-linked (GlcNAc...) asparagine glycan is attached at asparagine 280. 2 disordered regions span residues 512–533 and 766–839; these read WRVP…DEAE and LPPA…MVPA. Residues 515–527 are compositionally biased toward low complexity; sequence PGPAEGPAEPAAE. Serine 529 is modified (phosphoserine; by FAM20C). Positions 611–916 are binds to HSPA5/GRP78; the sequence is IEVRSPLSDS…RQLDRQSPGP (306 aa). The interval 671 to 1023 is confers cellular localization similar to full-length form; sequence LPAPKQEVAL…NYMERIRGSS (353 aa). Residues 778 to 790 are compositionally biased toward low complexity; that stretch reads SSPAWSPPATEAT. A compositionally biased stretch (basic and acidic residues) spans 809–823; the sequence is GKFERAEEEARKEET. Acidic residues predominate over residues 824–836; it reads EAREEEEEEEEEM. A helical transmembrane segment spans residues 853–873; the sequence is LLGVFCVAIFIFLVNGVVFVL. Topologically, residues 874–1023 are cytoplasmic; that stretch reads RYQRKEPPDS…NYMERIRGSS (150 aa). Residues 905 to 961 form a disordered region; sequence LSRQLDRQSPGPPKGEGSCPCESGGGGEAPTLAPGPPGGTTSSSSTLARKEAGGRRK.

This sequence belongs to the TMEM132 family. As to quaternary structure, interacts with HSPA5/GRP78.

The protein localises to the golgi apparatus membrane. The protein resides in the endoplasmic reticulum membrane. Its function is as follows. May play a role in embryonic and postnatal development of the brain. Increased resistance to cell death induced by serum starvation in cultured cells. Regulates cAMP-induced GFAP gene expression via STAT3 phosphorylation. The polypeptide is Transmembrane protein 132A (TMEM132A) (Homo sapiens (Human)).